Reading from the N-terminus, the 249-residue chain is MRKKIIAGNWKMNLTLAEAKEITKGLLSACDSSSYEIMVFPSALHLESVASIARDSQLIVGAQNAYQSGLTAMTGEISPVQLAELGIQTVLVGHSERRQFLGETSEFDNTKISYFLKHGLRVVYCVGETWAEREKGNTFSVLEDQIGKGLKGITSDLFKNLVIAYEPVWAIGTGKVATPVEAEEAHAFIRKEIGKLFVGADLVAENIQILYGGSVKPDNIKELLAKPNIDGGLVGGASQKLDLFLGLLK.

A substrate-binding site is contributed by 9-11; the sequence is NWK. H94 serves as the catalytic Electrophile. The Proton acceptor role is filled by E166. Substrate contacts are provided by residues G172, S214, and 235-236; that span reads GG.

Belongs to the triosephosphate isomerase family. In terms of assembly, homodimer.

Its subcellular location is the cytoplasm. The enzyme catalyses D-glyceraldehyde 3-phosphate = dihydroxyacetone phosphate. The protein operates within carbohydrate biosynthesis; gluconeogenesis. Its pathway is carbohydrate degradation; glycolysis; D-glyceraldehyde 3-phosphate from glycerone phosphate: step 1/1. In terms of biological role, involved in the gluconeogenesis. Catalyzes stereospecifically the conversion of dihydroxyacetone phosphate (DHAP) to D-glyceraldehyde-3-phosphate (G3P). The chain is Triosephosphate isomerase from Leptospira biflexa serovar Patoc (strain Patoc 1 / Ames).